A 169-amino-acid chain; its full sequence is Putative pre-16S rRNA nuclease (169 aa).

Residues 1-19 are compositionally biased toward basic and acidic residues; the sequence is MTDSDHRLPDRPGEGDPGR. Positions 1 to 22 are disordered; that stretch reads MTDSDHRLPDRPGEGDPGRGRR.

It belongs to the YqgF nuclease family.

It localises to the cytoplasm. Could be a nuclease involved in processing of the 5'-end of pre-16S rRNA. This chain is Putative pre-16S rRNA nuclease, found in Mycobacterium sp. (strain JLS).